We begin with the raw amino-acid sequence, 196 residues long: Large ribosomal subunit protein uL6 (196 aa).

It belongs to the universal ribosomal protein uL6 family. Part of the 50S ribosomal subunit.

Its function is as follows. This protein binds to the 23S rRNA, and is important in its secondary structure. It is located near the subunit interface in the base of the L7/L12 stalk, and near the tRNA binding site of the peptidyltransferase center. The polypeptide is Large ribosomal subunit protein uL6 (Archaeoglobus fulgidus (strain ATCC 49558 / DSM 4304 / JCM 9628 / NBRC 100126 / VC-16)).